Here is a 338-residue protein sequence, read N- to C-terminus: Solute carrier family 35 member G3 (338 aa).

Residues 1–24 (MAGSHPYFNQPDSTHPSPPSAPPS) are disordered. A run of 9 helical transmembrane segments spans residues 37–57 (TSGL…VGPL), 67–87 (LPSL…ALLL), 105–125 (FFCA…VQVV), 160–180 (CGLL…LWTL), 190–210 (ALGY…LLVY), 221–241 (TVAF…LFVL), 250–270 (LLSW…FTCV), 281–301 (LVCA…YYML), and 305–325 (VAPS…IITA). In terms of domain architecture, EamA 1 spans 49-174 (LPAGFVGPLS…CILGLIIIVG (126 aa)). One can recognise an EamA 2 domain in the interval 272-325 (YAVTKAHPALVCAVLHSEVVVALILQYYMLHETVAPSDIMGAGVALGSIAIITA).

This sequence belongs to the SLC35G solute transporter family.

Its subcellular location is the membrane. This is Solute carrier family 35 member G3 (SLC35G3) from Pan paniscus (Pygmy chimpanzee).